The chain runs to 257 residues: Galactitol 2-dehydrogenase (257 aa).

NAD(+)-binding positions include 21–23 (RAI), 67–68 (DV), asparagine 94, tyrosine 162, and lysine 166. Catalysis depends on tyrosine 162, which acts as the Proton acceptor.

The protein belongs to the short-chain dehydrogenases/reductases (SDR) family. As to quaternary structure, homotetramer. It depends on Mg(2+) as a cofactor.

The enzyme catalyses galactitol + NAD(+) = keto-D-tagatose + NADH + H(+). Functionally, catalyzes the oxidation of galactitol to D-tagatose. Also catalyzes the oxidation of a wide range of substrates, including polyvalent aliphatic alcohols and polyols, to the corresponding ketones and ketoses. Galactitol is the preferred substrate. The chain is Galactitol 2-dehydrogenase from Rhizobium johnstonii (strain DSM 114642 / LMG 32736 / 3841) (Rhizobium leguminosarum bv. viciae).